A 90-amino-acid polypeptide reads, in one-letter code: Small ribosomal subunit protein uS15c (90 aa).

Belongs to the universal ribosomal protein uS15 family. As to quaternary structure, part of the 30S ribosomal subunit.

It localises to the plastid. The protein localises to the chloroplast. This chain is Small ribosomal subunit protein uS15c (rps15-A), found in Pelargonium hortorum (Common geranium).